Reading from the N-terminus, the 283-residue chain is MIVTDKISNVRNIIKEQKLSGKKIGLVPTMGYLHEGHLSLVRIAKKHSDFVAVSIFVNPIQFGPNEDFDRYPRDLERDLKLLEKEGCDLVFAPSVEEMYPSELLTTVNVDKITEKLCGAFRPGHFKGVTTVVAKLFNIFTPDIAVFGQKDAQQVAVIKKMVEDLNFPVEIIKAPIVRESDGLAMSSRNVYLNPEERKAALILSKSLKEAEKLLLNGERNANTIIKKVNEVLNSEPLCKVQYVSCVHPDTLEDLTYIKDKALIAIACFIGTTRLIDNLLWGENI.

30-37 lines the ATP pocket; it reads MGYLHEGH. The active-site Proton donor is the histidine 37. (R)-pantoate is bound at residue glutamine 61. A beta-alanine-binding site is contributed by glutamine 61. 147-150 is a binding site for ATP; it reads GQKD. Glutamine 153 is a binding site for (R)-pantoate. ATP-binding positions include valine 176 and 184 to 187; that span reads MSSR.

The protein belongs to the pantothenate synthetase family. Homodimer.

Its subcellular location is the cytoplasm. The catalysed reaction is (R)-pantoate + beta-alanine + ATP = (R)-pantothenate + AMP + diphosphate + H(+). It functions in the pathway cofactor biosynthesis; (R)-pantothenate biosynthesis; (R)-pantothenate from (R)-pantoate and beta-alanine: step 1/1. Its function is as follows. Catalyzes the condensation of pantoate with beta-alanine in an ATP-dependent reaction via a pantoyl-adenylate intermediate. The protein is Pantothenate synthetase of Thermoanaerobacter pseudethanolicus (strain ATCC 33223 / 39E) (Clostridium thermohydrosulfuricum).